Consider the following 341-residue polypeptide: MQNLTVALDAMGGDFGPRVTVPAAVQALSHFPELKVILVGDQHQITQQLSLLGYSADTRLSIVHSDRVISNSEKPSLALRHSAGSSMGMAIDLVAENQADACVSGGNTGALMALSRFRLKLLPGIDRPALVSALPTISGRKTWMLDLGANVSSDADSLFQFAVMGAALAEQHLQQAPRVAILNIGAEEIKGNDLVKRCAEMLTQTQAINFIGYIEGNQLLTDAADVIVCDGFVGNVCLKACEGTAQLFIDKLKKSLLASSIKGWIARKLFSELFTELKTLNPDQYNGASLLGLRGIVIKSHGSADVSAVVNAISEAVHEVKRQVPSRISDRLEAVLLERHY.

The protein belongs to the PlsX family. As to quaternary structure, homodimer. Probably interacts with PlsY.

The protein localises to the cytoplasm. The catalysed reaction is a fatty acyl-[ACP] + phosphate = an acyl phosphate + holo-[ACP]. The protein operates within lipid metabolism; phospholipid metabolism. Its function is as follows. Catalyzes the reversible formation of acyl-phosphate (acyl-PO(4)) from acyl-[acyl-carrier-protein] (acyl-ACP). This enzyme utilizes acyl-ACP as fatty acyl donor, but not acyl-CoA. The sequence is that of Phosphate acyltransferase from Vibrio cholerae serotype O1 (strain ATCC 39541 / Classical Ogawa 395 / O395).